Reading from the N-terminus, the 212-residue chain is External core antigen (212 aa).

Positions Met1–Ala19 are cleaved as a signal peptide. The interval Gly25–Leu27 is HBEAG. Residues Asn165–Cys212 are disordered. Positions Val178–Ser205 are enriched in basic residues. The stretch at Ser184–Pro190 is one 1; half-length repeat. Positions Ser184 to Gln206 are 3 X 8 AA repeats of S-P-R-R-R-R-S-Q. The propeptide occupies Ser184–Cys212. A run of 2 repeats spans residues Ser191–Gln198 and Ser199–Gln206.

Belongs to the orthohepadnavirus precore antigen family. Homodimerizes. Phosphorylated. Post-translationally, cleaved by host furin.

The protein localises to the secreted. It localises to the host nucleus. Its function is as follows. May regulate immune response to the intracellular capsid in acting as a T-cell tolerogen, by having an immunoregulatory effect which prevents destruction of infected cells by cytotoxic T-cells. This immune regulation may predispose to chronicity during perinatal infections and prevent severe liver injury during adult infections. The chain is External core antigen from Hepatitis B virus genotype C subtype ayw (isolate China/Tibet127/2002) (HBV-C).